Consider the following 312-residue polypeptide: Beta-ketoacyl-[acyl-carrier-protein] synthase III (312 aa).

Residues Cys-112 and His-237 contribute to the active site. The segment at 238–242 is ACP-binding; that stretch reads QANIR. Asn-267 is a catalytic residue.

Belongs to the thiolase-like superfamily. FabH family. In terms of assembly, homodimer.

It is found in the cytoplasm. It carries out the reaction malonyl-[ACP] + acetyl-CoA + H(+) = 3-oxobutanoyl-[ACP] + CO2 + CoA. It participates in lipid metabolism; fatty acid biosynthesis. Its function is as follows. Catalyzes the condensation reaction of fatty acid synthesis by the addition to an acyl acceptor of two carbons from malonyl-ACP. Catalyzes the first condensation reaction which initiates fatty acid synthesis and may therefore play a role in governing the total rate of fatty acid production. Possesses both acetoacetyl-ACP synthase and acetyl transacylase activities. Its substrate specificity determines the biosynthesis of branched-chain and/or straight-chain of fatty acids. The polypeptide is Beta-ketoacyl-[acyl-carrier-protein] synthase III (Listeria welshimeri serovar 6b (strain ATCC 35897 / DSM 20650 / CCUG 15529 / CIP 8149 / NCTC 11857 / SLCC 5334 / V8)).